Reading from the N-terminus, the 213-residue chain is MRTSSFLDRLISEVDSALRTLVLPPKRITTRQSPAENLADTVLSAQEKKHISGLMRVNHAGEVCAQALYQGQALTAQLTHIKEQMASAAAEEVDHLAWCEERLYELGSKPSLLNPIWYCGSVLLGALAGLAGDKVSLGFVAETERQVTAHLQRHLHYLPEKDKKTIAILKRMQEDEEHHAHTAMEAGAVELPYIIKQLMNAVSKLMTQSSYYI.

Glu62, Glu92, His95, Glu144, Glu176, and His179 together coordinate Fe cation.

Belongs to the COQ7 family. The cofactor is Fe cation.

It localises to the cell membrane. It catalyses the reaction a 5-methoxy-2-methyl-3-(all-trans-polyprenyl)benzene-1,4-diol + AH2 + O2 = a 3-demethylubiquinol + A + H2O. It participates in cofactor biosynthesis; ubiquinone biosynthesis. Functionally, catalyzes the hydroxylation of 2-nonaprenyl-3-methyl-6-methoxy-1,4-benzoquinol during ubiquinone biosynthesis. This chain is 3-demethoxyubiquinol 3-hydroxylase, found in Legionella pneumophila (strain Paris).